Reading from the N-terminus, the 262-residue chain is Triosephosphate isomerase (262 aa).

9–11 contributes to the substrate binding site; sequence NWK. H99 serves as the catalytic Electrophile. The active-site Proton acceptor is the E171. Residues G177 and S216 each contribute to the substrate site.

It belongs to the triosephosphate isomerase family. Homodimer.

It localises to the cytoplasm. The enzyme catalyses D-glyceraldehyde 3-phosphate = dihydroxyacetone phosphate. It functions in the pathway carbohydrate biosynthesis; gluconeogenesis. It participates in carbohydrate degradation; glycolysis; D-glyceraldehyde 3-phosphate from glycerone phosphate: step 1/1. Its function is as follows. Involved in the gluconeogenesis. Catalyzes stereospecifically the conversion of dihydroxyacetone phosphate (DHAP) to D-glyceraldehyde-3-phosphate (G3P). The sequence is that of Triosephosphate isomerase from Blochmanniella floridana.